The chain runs to 212 residues: Stem bromelain (212 aa).

Disulfide bonds link cysteine 23–cysteine 63 and cysteine 57–cysteine 96. Residue cysteine 26 is part of the active site. An N-linked (GlcNAc...) asparagine glycan is attached at asparagine 117. Cysteine 152 and cysteine 199 form a disulfide bridge. Histidine 158 is an active-site residue.

The protein belongs to the peptidase C1 family.

It catalyses the reaction Broad specificity for cleavage of proteins, but strong preference for Z-Arg-Arg-|-NHMec among small molecule substrates.. Functionally, cysteine proteinase with a high level of diversity in substrate specificity. The sequence is that of Stem bromelain from Ananas comosus (Pineapple).